A 265-amino-acid polypeptide reads, in one-letter code: Capsule polysaccharide export inner-membrane protein CtrC (265 aa).

6 helical membrane-spanning segments follow: residues 37-57, 67-84, 121-141, 148-168, 178-198, and 238-258; these read IGFL…VLMW, TLNI…LMMW, IAGA…IGWI, FYML…GLVI, FGKI…AFFF, and WYIV…VSKF. One can recognise an ABC transmembrane type-2 domain in the interval 37–258; that stretch reads IGFLWLFVEP…LFGLAMVSKF (222 aa).

This sequence belongs to the ABC-2 integral membrane protein family.

It is found in the cell inner membrane. May form an ATP-driven capsule polysaccharide export apparatus, in association with the CtrB and CtrD proteins. This is Capsule polysaccharide export inner-membrane protein CtrC (ctrC) from Neisseria meningitidis serogroup B (strain ATCC BAA-335 / MC58).